A 542-amino-acid chain; its full sequence is Chaperonin GroEL 1 (542 aa).

ATP-binding positions include Thr29–Pro32, Asp86–Thr90, Gly413, Asn477–Ala479, and Asp493.

The protein belongs to the chaperonin (HSP60) family. In terms of assembly, forms a cylinder of 14 subunits composed of two heptameric rings stacked back-to-back. Interacts with the co-chaperonin GroES.

It is found in the cytoplasm. It carries out the reaction ATP + H2O + a folded polypeptide = ADP + phosphate + an unfolded polypeptide.. In terms of biological role, together with its co-chaperonin GroES, plays an essential role in assisting protein folding. The GroEL-GroES system forms a nano-cage that allows encapsulation of the non-native substrate proteins and provides a physical environment optimized to promote and accelerate protein folding. The sequence is that of Chaperonin GroEL 1 from Kineococcus radiotolerans (strain ATCC BAA-149 / DSM 14245 / SRS30216).